The following is a 341-amino-acid chain: Glycerol-3-phosphate dehydrogenase [NAD(P)+] (341 aa).

The NADPH site is built by Ser17, Trp18, Arg37, and Lys112. Sn-glycerol 3-phosphate contacts are provided by Lys112 and Gly140. An NADPH-binding site is contributed by Ala144. 5 residues coordinate sn-glycerol 3-phosphate: Lys195, Asp248, Ser258, Arg259, and Asn260. The active-site Proton acceptor is Lys195. Arg259 provides a ligand contact to NADPH. NADPH contacts are provided by Val283 and Glu285.

The protein belongs to the NAD-dependent glycerol-3-phosphate dehydrogenase family.

It localises to the cytoplasm. It carries out the reaction sn-glycerol 3-phosphate + NAD(+) = dihydroxyacetone phosphate + NADH + H(+). It catalyses the reaction sn-glycerol 3-phosphate + NADP(+) = dihydroxyacetone phosphate + NADPH + H(+). The protein operates within membrane lipid metabolism; glycerophospholipid metabolism. Its function is as follows. Catalyzes the reduction of the glycolytic intermediate dihydroxyacetone phosphate (DHAP) to sn-glycerol 3-phosphate (G3P), the key precursor for phospholipid synthesis. The polypeptide is Glycerol-3-phosphate dehydrogenase [NAD(P)+] (Mycobacterium avium (strain 104)).